The following is a 476-amino-acid chain: UDP-N-acetylmuramate--L-alanine ligase (476 aa).

121 to 127 contacts ATP; that stretch reads GAHGKTT.

Belongs to the MurCDEF family.

Its subcellular location is the cytoplasm. The enzyme catalyses UDP-N-acetyl-alpha-D-muramate + L-alanine + ATP = UDP-N-acetyl-alpha-D-muramoyl-L-alanine + ADP + phosphate + H(+). It functions in the pathway cell wall biogenesis; peptidoglycan biosynthesis. Functionally, cell wall formation. The polypeptide is UDP-N-acetylmuramate--L-alanine ligase (Clavibacter michiganensis subsp. michiganensis (strain NCPPB 382)).